The chain runs to 404 residues: Phosphopentomutase (404 aa).

Mn(2+)-binding residues include aspartate 10, aspartate 303, histidine 308, aspartate 344, histidine 345, and histidine 356.

This sequence belongs to the phosphopentomutase family. It depends on Mn(2+) as a cofactor.

Its subcellular location is the cytoplasm. The enzyme catalyses 2-deoxy-alpha-D-ribose 1-phosphate = 2-deoxy-D-ribose 5-phosphate. It carries out the reaction alpha-D-ribose 1-phosphate = D-ribose 5-phosphate. It functions in the pathway carbohydrate degradation; 2-deoxy-D-ribose 1-phosphate degradation; D-glyceraldehyde 3-phosphate and acetaldehyde from 2-deoxy-alpha-D-ribose 1-phosphate: step 1/2. Functionally, isomerase that catalyzes the conversion of deoxy-ribose 1-phosphate (dRib-1-P) and ribose 1-phosphate (Rib-1-P) to deoxy-ribose 5-phosphate (dRib-5-P) and ribose 5-phosphate (Rib-5-P), respectively. This Shewanella putrefaciens (strain CN-32 / ATCC BAA-453) protein is Phosphopentomutase.